The chain runs to 397 residues: Tryptophan synthase beta chain (397 aa).

An N6-(pyridoxal phosphate)lysine modification is found at Lys88.

Belongs to the TrpB family. In terms of assembly, tetramer of two alpha and two beta chains. The cofactor is pyridoxal 5'-phosphate.

The enzyme catalyses (1S,2R)-1-C-(indol-3-yl)glycerol 3-phosphate + L-serine = D-glyceraldehyde 3-phosphate + L-tryptophan + H2O. Its pathway is amino-acid biosynthesis; L-tryptophan biosynthesis; L-tryptophan from chorismate: step 5/5. The beta subunit is responsible for the synthesis of L-tryptophan from indole and L-serine. The sequence is that of Tryptophan synthase beta chain from Shewanella amazonensis (strain ATCC BAA-1098 / SB2B).